The following is a 114-amino-acid chain: Acetyltransferase At1g77540 (114 aa).

Position 2 is an N-acetylthreonine (Thr-2). The N-acetyltransferase domain occupies 18 to 106 (KIVWNEGKRR…RNPSWKPLIH (89 aa)). CoA contacts are provided by residues 52 to 55 (HTYV) and 61 to 66 (GLGLAS). The Nucleophile role is filled by Cys-87. CoA contacts are provided by residues 88–89 (SY), Thr-93, and Arg-97.

Its subcellular location is the peroxisome. Possesses in vitro histone acetyltransferase activity with histones H3 and H4. The sequence is that of Acetyltransferase At1g77540 from Arabidopsis thaliana (Mouse-ear cress).